Reading from the N-terminus, the 271-residue chain is Phosphate import ATP-binding protein PstB (271 aa).

In terms of domain architecture, ABC transporter spans 13–266; that stretch reads VRTAPVSEAE…PKHPYTEAYI (254 aa). ATP is bound at residue 57-64; it reads GPSGCGKS.

It belongs to the ABC transporter superfamily. Phosphate importer (TC 3.A.1.7) family. As to quaternary structure, the complex is composed of two ATP-binding proteins (PstB), two transmembrane proteins (PstC and PstA) and a solute-binding protein (PstS).

The protein resides in the cell inner membrane. The enzyme catalyses phosphate(out) + ATP + H2O = ADP + 2 phosphate(in) + H(+). Its function is as follows. Part of the ABC transporter complex PstSACB involved in phosphate import. Responsible for energy coupling to the transport system. The chain is Phosphate import ATP-binding protein PstB from Thermus thermophilus (strain ATCC 27634 / DSM 579 / HB8).